The primary structure comprises 148 residues: FAD synthase (148 aa).

ATP-binding positions include 14-15, 19-22, and D97; these read TF and HPGH.

Belongs to the archaeal FAD synthase family. In terms of assembly, homodimer. A divalent metal cation is required as a cofactor.

It carries out the reaction FMN + ATP + H(+) = FAD + diphosphate. The protein operates within cofactor biosynthesis; FAD biosynthesis; FAD from FMN: step 1/1. Functionally, catalyzes the transfer of the AMP portion of ATP to flavin mononucleotide (FMN) to produce flavin adenine dinucleotide (FAD) coenzyme. The polypeptide is FAD synthase (Natrialba magadii (strain ATCC 43099 / DSM 3394 / CCM 3739 / CIP 104546 / IAM 13178 / JCM 8861 / NBRC 102185 / NCIMB 2190 / MS3) (Natronobacterium magadii)).